We begin with the raw amino-acid sequence, 498 residues long: Galactose-1-phosphate uridylyltransferase (498 aa).

The protein belongs to the galactose-1-phosphate uridylyltransferase type 2 family.

It is found in the cytoplasm. It catalyses the reaction alpha-D-galactose 1-phosphate + UDP-alpha-D-glucose = alpha-D-glucose 1-phosphate + UDP-alpha-D-galactose. It participates in carbohydrate metabolism; galactose metabolism. This chain is Galactose-1-phosphate uridylyltransferase, found in Latilactobacillus sakei subsp. sakei (strain 23K) (Lactobacillus sakei subsp. sakei).